The chain runs to 469 residues: Argininosuccinate lyase (469 aa).

It belongs to the lyase 1 family. Argininosuccinate lyase subfamily.

The protein resides in the cytoplasm. The catalysed reaction is 2-(N(omega)-L-arginino)succinate = fumarate + L-arginine. Its pathway is amino-acid biosynthesis; L-arginine biosynthesis; L-arginine from L-ornithine and carbamoyl phosphate: step 3/3. The sequence is that of Argininosuccinate lyase from Mycolicibacterium smegmatis (strain ATCC 700084 / mc(2)155) (Mycobacterium smegmatis).